We begin with the raw amino-acid sequence, 187 residues long: Adenine phosphoribosyltransferase 1 (187 aa).

Ser68 carries the post-translational modification Phosphoserine. AMP is bound at residue 133–137 (ATGGS).

Belongs to the purine/pyrimidine phosphoribosyltransferase family. In terms of assembly, homodimer. It depends on Mg(2+) as a cofactor.

The protein localises to the cytoplasm. The protein resides in the nucleus. The catalysed reaction is AMP + diphosphate = 5-phospho-alpha-D-ribose 1-diphosphate + adenine. Its pathway is purine metabolism; AMP biosynthesis via salvage pathway; AMP from adenine: step 1/1. In terms of biological role, catalyzes a salvage reaction resulting in the formation of AMP, that is energically less costly than de novo synthesis. This is Adenine phosphoribosyltransferase 1 from Saccharomyces cerevisiae (strain ATCC 204508 / S288c) (Baker's yeast).